The following is a 225-amino-acid chain: Cytidylate kinase (225 aa).

Glycine 10–threonine 18 is a binding site for ATP.

The protein belongs to the cytidylate kinase family. Type 1 subfamily.

Its subcellular location is the cytoplasm. It catalyses the reaction CMP + ATP = CDP + ADP. The enzyme catalyses dCMP + ATP = dCDP + ADP. This is Cytidylate kinase from Streptococcus sanguinis (strain SK36).